The following is a 399-amino-acid chain: Phosphatidate cytidylyltransferase 5, chloroplastic (399 aa).

Residues methionine 1 to arginine 26 constitute a chloroplast transit peptide. 6 helical membrane-spanning segments follow: residues valine 123 to leucine 143, phenylalanine 187 to leucine 207, leucine 217 to leucine 237, valine 266 to phenylalanine 286, alanine 309 to tryptophan 329, and leucine 333 to threonine 353.

This sequence belongs to the CDS family. The cofactor is Mg(2+).

The protein localises to the plastid. It is found in the chloroplast membrane. It catalyses the reaction a 1,2-diacyl-sn-glycero-3-phosphate + CTP + H(+) = a CDP-1,2-diacyl-sn-glycerol + diphosphate. It functions in the pathway phospholipid metabolism; CDP-diacylglycerol biosynthesis; CDP-diacylglycerol from sn-glycerol 3-phosphate: step 3/3. With respect to regulation, highest activities is obtained at about 30 mM CTP and 2 mM phosphatidic acid (PA). Functionally, may be involved in the synthesis of minor phospholipids and in modulation of IP3-mediated signal transduction. Promotes the biosynthesis of plastidial phosphatidylglycerol (PG) which is required for structure and function of thylakoid membranes and, hence, for photoautotrophic growth. The polypeptide is Phosphatidate cytidylyltransferase 5, chloroplastic (Arabidopsis thaliana (Mouse-ear cress)).